The following is a 1803-amino-acid chain: Transposon Ty4-J Gag-Pol polyprotein (1803 aa).

The stretch at 39 to 115 forms a coiled coil; sequence RKVSIKDEQV…IQLLETNENN (77 aa). The segment at 382-502 is ty4 protease; sequence NNHLSPVQNE…KTKMVLSRKY (121 aa). D415 (for protease activity; shared with dimeric partner) is an active-site residue. The interval 540–600 is integrase-type zinc finger-like; the sequence is AIKPTSSPGF…EPNEFWCQTC (61 aa). The 168-residue stretch at 620-787 folds into the Integrase catalytic domain; sequence TDHEPGSSWC…LPLKAISRQP (168 aa). Mg(2+) contacts are provided by D631 and D696. A disordered region spans residues 1224-1250; that stretch reads KRKRKRHDKNNSLTSYELERDKKRSKK. The Reverse transcriptase Ty1/copia-type domain occupies 1376-1511; that stretch reads RNMFMKTLDI…DILGMDLVYN (136 aa). Residues D1384, D1463, D1464, D1645, E1687, and D1721 each contribute to the Mg(2+) site. Residues 1645 to 1791 enclose the RNase H Ty1/copia-type domain; sequence DASVGSEYDA…KRFIQVLKNK (147 aa).

In terms of assembly, the protease is a homodimer, whose active site consists of two apposed aspartic acid residues. In terms of processing, proteolytically processed into capsid protein (CA), Ty4 protease (PR), integrase (IN) and reverse transcriptase/ribonuclease H (RT) proteins. Initially, virus-like particles (VLPs) are composed of the structural unprocessed proteins Gag and Gag-Pol, and also contain the host initiator methionine tRNA (tRNA(i)-Met) which serves as a primer for minus-strand DNA synthesis, and a dimer of genomic Ty RNA. Processing of the polyproteins occurs within the particle and proceeds by an ordered pathway, called maturation. First, the protease (PR) is released by autocatalytic cleavage of the Gag-Pol polyprotein, and this cleavage is a prerequisite for subsequent processing at the remaining sites to release the mature structural and catalytic proteins. Maturation takes place prior to the RT reaction and is required to produce transposition-competent VLPs.

It is found in the cytoplasm. Its subcellular location is the nucleus. It carries out the reaction DNA(n) + a 2'-deoxyribonucleoside 5'-triphosphate = DNA(n+1) + diphosphate. It catalyses the reaction Endonucleolytic cleavage to 5'-phosphomonoester.. Its function is as follows. Capsid protein (CA) is the structural component of the virus-like particle (VLP), forming the shell that encapsulates the retrotransposons dimeric RNA genome. The aspartyl protease (PR) mediates the proteolytic cleavages of the Gag and Gag-Pol polyproteins after assembly of the VLP. Functionally, reverse transcriptase/ribonuclease H (RT) is a multifunctional enzyme that catalyzes the conversion of the retro-elements RNA genome into dsDNA within the VLP. The enzyme displays a DNA polymerase activity that can copy either DNA or RNA templates, and a ribonuclease H (RNase H) activity that cleaves the RNA strand of RNA-DNA heteroduplexes during plus-strand synthesis and hydrolyzes RNA primers. The conversion leads to a linear dsDNA copy of the retrotransposon that includes long terminal repeats (LTRs) at both ends. In terms of biological role, integrase (IN) targets the VLP to the nucleus, where a subparticle preintegration complex (PIC) containing at least integrase and the newly synthesized dsDNA copy of the retrotransposon must transit the nuclear membrane. Once in the nucleus, integrase performs the integration of the dsDNA into the host genome. This chain is Transposon Ty4-J Gag-Pol polyprotein (TY4B-J), found in Saccharomyces cerevisiae (strain ATCC 204508 / S288c) (Baker's yeast).